Here is a 498-residue protein sequence, read N- to C-terminus: Putative BTB/POZ domain-containing protein L67 (498 aa).

The BTB domain occupies 26–96 (SDINITLSDN…MYGISLSEIN (71 aa)).

This sequence belongs to the mimivirus BTB/WD family.

In Acanthamoeba polyphaga (Amoeba), this protein is Putative BTB/POZ domain-containing protein L67.